The following is a 306-amino-acid chain: MLIRHAPDLTDNDVTDHSLYLKRRTLMAGVAGLGVAGASASHAQAGLTFSRGFSTTEKPTSKEDITTYNNFYEFGVDKSDPAENSGKFKPRPWTVRIDGACEAPRTVGIEDLIGKNKLEERIYRMRCVEGWSMVIPWVGFPLKDLLASVKPTSKAKFVAFETVMRPSEMPGQAWNTLDWPYREGLRIDEAMHPLTLMAVGLYGDVLPNQNGAPLRLVVPWKYGFKGIKSIVRISLVEKQPVTSWNVLAPREYGFYSNVNPAVDHPRWSQATERRIGEFRRRETLAFNGYGEWVADMYRSMDLKRFY.

The tat-type signal signal peptide spans 1–45 (MLIRHAPDLTDNDVTDHSLYLKRRTLMAGVAGLGVAGASASHAQA). Residues Asn69, 72–73 (YE), Cys127, Thr162, Asn210, Arg215, and 226–228 (GIK) contribute to the Mo-molybdopterin site.

This sequence belongs to the MsrP family. As to quaternary structure, heterodimer of a catalytic subunit (MsrP) and a heme-binding subunit (MsrQ). Mo-molybdopterin is required as a cofactor. Post-translationally, predicted to be exported by the Tat system. The position of the signal peptide cleavage has not been experimentally proven.

The protein localises to the periplasm. The catalysed reaction is L-methionyl-[protein] + a quinone + H2O = L-methionyl-(S)-S-oxide-[protein] + a quinol. It carries out the reaction L-methionyl-[protein] + a quinone + H2O = L-methionyl-(R)-S-oxide-[protein] + a quinol. In terms of biological role, part of the MsrPQ system that repairs oxidized periplasmic proteins containing methionine sulfoxide residues (Met-O), using respiratory chain electrons. Thus protects these proteins from oxidative-stress damage caused by reactive species of oxygen and chlorine generated by the host defense mechanisms. MsrPQ is essential for the maintenance of envelope integrity under bleach stress, rescuing a wide series of structurally unrelated periplasmic proteins from methionine oxidation. The catalytic subunit MsrP is non-stereospecific, being able to reduce both (R-) and (S-) diastereoisomers of methionine sulfoxide. In Caulobacter vibrioides (strain ATCC 19089 / CIP 103742 / CB 15) (Caulobacter crescentus), this protein is Protein-methionine-sulfoxide reductase catalytic subunit MsrP.